The following is a 170-amino-acid chain: uncharacterized protein (170 aa).

The region spanning 8–167 is the N-acetyltransferase domain; that stretch reads LLIREFEFKD…DEYYYAILEE (160 aa).

It belongs to the acetyltransferase family.

This is an uncharacterized protein from Bacillus subtilis (strain 168).